The primary structure comprises 465 residues: tRNA-2-methylthio-N(6)-dimethylallyladenosine synthase (465 aa).

One can recognise an MTTase N-terminal domain in the interval 5–125; that stretch reads RKLHIKSYGC…LPELLKRAGN (121 aa). [4Fe-4S] cluster is bound by residues Cys-14, Cys-50, Cys-88, Cys-166, Cys-170, and Cys-173. Residues 152-384 form the Radical SAM core domain; sequence RARGISAFVT…QELIDSQQSA (233 aa). Positions 387-449 constitute a TRAM domain; that stretch reads KAAIGSTVDV…RYSFLGELVT (63 aa).

This sequence belongs to the methylthiotransferase family. MiaB subfamily. In terms of assembly, monomer. Requires [4Fe-4S] cluster as cofactor.

The protein localises to the cytoplasm. It carries out the reaction N(6)-dimethylallyladenosine(37) in tRNA + (sulfur carrier)-SH + AH2 + 2 S-adenosyl-L-methionine = 2-methylsulfanyl-N(6)-dimethylallyladenosine(37) in tRNA + (sulfur carrier)-H + 5'-deoxyadenosine + L-methionine + A + S-adenosyl-L-homocysteine + 2 H(+). Functionally, catalyzes the methylthiolation of N6-(dimethylallyl)adenosine (i(6)A), leading to the formation of 2-methylthio-N6-(dimethylallyl)adenosine (ms(2)i(6)A) at position 37 in tRNAs that read codons beginning with uridine. The protein is tRNA-2-methylthio-N(6)-dimethylallyladenosine synthase of Bradyrhizobium diazoefficiens (strain JCM 10833 / BCRC 13528 / IAM 13628 / NBRC 14792 / USDA 110).